A 395-amino-acid chain; its full sequence is Elongation factor Tu (395 aa).

In terms of domain architecture, tr-type G spans 10–204; the sequence is KPHVNVGTIG…AVDAYIDTPL (195 aa). The segment at 19-26 is G1; it reads GHVDHGKT. 19–26 lines the GTP pocket; that stretch reads GHVDHGKT. Residue threonine 26 coordinates Mg(2+). The segment at 60–64 is G2; sequence GITIN. Positions 81–84 are G3; the sequence is DCPG. GTP-binding positions include 81-85 and 136-139; these read DCPGH and NKAD. The segment at 136–139 is G4; sequence NKAD. The interval 174 to 176 is G5; the sequence is SAL.

Belongs to the TRAFAC class translation factor GTPase superfamily. Classic translation factor GTPase family. EF-Tu/EF-1A subfamily. As to quaternary structure, monomer.

The protein resides in the cytoplasm. The catalysed reaction is GTP + H2O = GDP + phosphate + H(+). In terms of biological role, GTP hydrolase that promotes the GTP-dependent binding of aminoacyl-tRNA to the A-site of ribosomes during protein biosynthesis. This Acholeplasma laidlawii (strain PG-8A) protein is Elongation factor Tu.